The primary structure comprises 335 residues: Ketol-acid reductoisomerase (NADP(+)) (335 aa).

The KARI N-terminal Rossmann domain maps to 5-185 (SKIYTDKDSN…GATRAGVIPT (181 aa)). NADP(+) contacts are provided by residues 28 to 31 (YGSQ), S56, and 86 to 89 (DMVQ). H111 is a catalytic residue. Residue G137 participates in NADP(+) binding. In terms of domain architecture, KARI C-terminal knotted spans 186 to 331 (TFKEETETDL…NQLKDLIQKG (146 aa)). The Mg(2+) site is built by D194, E198, E230, and E234. S255 contributes to the substrate binding site.

It belongs to the ketol-acid reductoisomerase family. The cofactor is Mg(2+).

It catalyses the reaction (2R)-2,3-dihydroxy-3-methylbutanoate + NADP(+) = (2S)-2-acetolactate + NADPH + H(+). The catalysed reaction is (2R,3R)-2,3-dihydroxy-3-methylpentanoate + NADP(+) = (S)-2-ethyl-2-hydroxy-3-oxobutanoate + NADPH + H(+). Its pathway is amino-acid biosynthesis; L-isoleucine biosynthesis; L-isoleucine from 2-oxobutanoate: step 2/4. The protein operates within amino-acid biosynthesis; L-valine biosynthesis; L-valine from pyruvate: step 2/4. In terms of biological role, involved in the biosynthesis of branched-chain amino acids (BCAA). Catalyzes an alkyl-migration followed by a ketol-acid reduction of (S)-2-acetolactate (S2AL) to yield (R)-2,3-dihydroxy-isovalerate. In the isomerase reaction, S2AL is rearranged via a Mg-dependent methyl migration to produce 3-hydroxy-3-methyl-2-ketobutyrate (HMKB). In the reductase reaction, this 2-ketoacid undergoes a metal-dependent reduction by NADPH to yield (R)-2,3-dihydroxy-isovalerate. This Saccharolobus islandicus (strain L.S.2.15 / Lassen #1) (Sulfolobus islandicus) protein is Ketol-acid reductoisomerase (NADP(+)).